We begin with the raw amino-acid sequence, 404 residues long: CD209 antigen (404 aa).

The Cytoplasmic segment spans residues 1–37 (MSDSKEPRLQQLDLLEEEQLGGVGFRQTRGYKSLAGC). 3 consecutive short sequence motifs (endocytosis signal) follow at residues 14 to 15 (LL), 16 to 18 (EEE), and 31 to 34 (YKSL). The chain crosses the membrane as a helical; Signal-anchor for type II membrane protein span at residues 38–58 (LGHGPLVLQLLSFTLLAGLLV). Residues 59–404 (QVSKVPSSLS…APTTPNPPPA (346 aa)) lie on the Extracellular side of the membrane. An N-linked (GlcNAc...) asparagine glycan is attached at Asn80. 7 tandem repeats follow at residues 96–118 (KQQEIYQELTRLKAAVGELPEKS), 119–141 (KQQEIYEELTRLKAAVGELPEKS), 142–164 (KLQEIYQELTRLKAAVGELPEKS), 165–187 (KMQEIYQELSRLKAAVGDLPEKS), 188–210 (KQQEIYQELSRLKAAVGDLPEKS), 211–233 (KQQEIYQKLTQLKAAVDGLPDRS), and 234–257 (KQQEIYQELIQLKAAVERLCHPCP). Positions 96–257 (KQQEIYQELT…AVERLCHPCP (162 aa)) are 7 X approximate tandem repeats. Disulfide bonds link Cys256/Cys267, Cys284/Cys377, and Cys356/Cys369. The 116-residue stretch at 263-378 (FQGNCYFMSN…CNLAKFWICK (116 aa)) folds into the C-type lectin domain. Positions 347, 349, 351, 354, 365, and 366 each coordinate Ca(2+). The interval 382–404 (ASCSGDEERLLSPAPTTPNPPPA) is disordered.

Homotetramer. Interacts with C1QBP; the interaction is indicative for a C1q:C1QBP:CD209 signaling complex. Interacts with ICAM2 and ICAM3 by binding to mannose-like carbohydrates. Interacts (via C-type lectin domain) with CEACAM1 (via Lewis X moieties); this interaction is regulated by the glycosylation pattern of CEACAM1 on cell types and regulates contact between dendritic cells and neutrophils.

Its subcellular location is the membrane. Its function is as follows. Pathogen-recognition receptor expressed on the surface of immature dendritic cells (DCs) and involved in initiation of primary immune response. Thought to mediate the endocytosis of pathogens which are subsequently degraded in lysosomal compartments. The receptor returns to the cell membrane surface and the pathogen-derived antigens are presented to resting T-cells via MHC class II proteins to initiate the adaptive immune response. Probably recognizes in a calcium-dependent manner high mannose N-linked oligosaccharides in a variety of pathogen antigens. Functionally, on DCs it is a high affinity receptor for ICAM2 and ICAM3 by binding to mannose-like carbohydrates. May act as a DC rolling receptor that mediates transendothelial migration of DC presursors from blood to tissues by binding endothelial ICAM2. Seems to regulate DC-induced T-cell proliferation by binding to ICAM3 on T-cells in the immunological synapse formed between DC and T-cells. The chain is CD209 antigen (CD209) from Macaca mulatta (Rhesus macaque).